The sequence spans 377 residues: Succinyl-diaminopimelate desuccinylase (377 aa).

H66 provides a ligand contact to Zn(2+). Residue D68 is part of the active site. D99 serves as a coordination point for Zn(2+). Residue E133 is the Proton acceptor of the active site. The Zn(2+) site is built by E134, E163, and H349.

The protein belongs to the peptidase M20A family. DapE subfamily. In terms of assembly, homodimer. It depends on Zn(2+) as a cofactor. The cofactor is Co(2+).

The enzyme catalyses N-succinyl-(2S,6S)-2,6-diaminopimelate + H2O = (2S,6S)-2,6-diaminopimelate + succinate. It participates in amino-acid biosynthesis; L-lysine biosynthesis via DAP pathway; LL-2,6-diaminopimelate from (S)-tetrahydrodipicolinate (succinylase route): step 3/3. Functionally, catalyzes the hydrolysis of N-succinyl-L,L-diaminopimelic acid (SDAP), forming succinate and LL-2,6-diaminopimelate (DAP), an intermediate involved in the bacterial biosynthesis of lysine and meso-diaminopimelic acid, an essential component of bacterial cell walls. This is Succinyl-diaminopimelate desuccinylase from Legionella pneumophila (strain Paris).